Consider the following 91-residue polypeptide: Acylphosphatase (91 aa).

Positions 5–91 (RLTAWVRGHV…RGSFTGFEER (87 aa)) constitute an Acylphosphatase-like domain. Catalysis depends on residues R20 and N38.

This sequence belongs to the acylphosphatase family.

The catalysed reaction is an acyl phosphate + H2O = a carboxylate + phosphate + H(+). The protein is Acylphosphatase (acyP) of Thermobifida fusca (strain YX).